A 95-amino-acid chain; its full sequence is DNA-directed RNA polymerase subunit omega (95 aa).

It belongs to the RNA polymerase subunit omega family. In terms of assembly, the RNAP catalytic core consists of 2 alpha, 1 beta, 1 beta' and 1 omega subunit. When a sigma factor is associated with the core the holoenzyme is formed, which can initiate transcription.

The catalysed reaction is RNA(n) + a ribonucleoside 5'-triphosphate = RNA(n+1) + diphosphate. Promotes RNA polymerase assembly. Latches the N- and C-terminal regions of the beta' subunit thereby facilitating its interaction with the beta and alpha subunits. This chain is DNA-directed RNA polymerase subunit omega, found in Colwellia psychrerythraea (strain 34H / ATCC BAA-681) (Vibrio psychroerythus).